The primary structure comprises 303 residues: Growth/differentiation factor 15 (303 aa).

The N-terminal stretch at 1-30 (MAPPALQAQPPGGSQLRFLLFLLLLLLLLS) is a signal peptide. Residues 31–188 (WPSQGDALAM…LRVAAGRGRR (158 aa)) constitute a propeptide that is removed on maturation. Asn-71 carries N-linked (GlcNAc...) asparagine glycosylation. Intrachain disulfides connect Cys-198–Cys-205, Cys-206–Cys-269, Cys-235–Cys-300, and Cys-239–Cys-302.

Belongs to the TGF-beta family. As to quaternary structure, homodimer; disulfide-linked. Interacts with GFRAL and RET; ligand of GFRAL, which mediates GDF15 internalization and cellular signaling through interaction with RET via the formation of a 2:2:2 ternary complex composed of GDF15, GFRAL and RET. In terms of tissue distribution, detected in plasma (at protein level). Highly expressed in liver. Expressed in the distal small intestine, colon and kidney. Expressed in skeletal muscle in response to mitochondrial stress. Expressed by cardiomyocytes, expression is highly increased in heart diseases. Also detected in subcutaneous fat.

The protein resides in the secreted. Hormone produced in response to various stresses to confer information about those stresses to the brain, and trigger an aversive response, characterized by nausea and/or loss of appetite. The aversive response is both required to reduce continuing exposure to those stresses at the time of exposure and to promote avoidance behavior in the future. Acts by binding to its receptor, GFRAL, activating GFRAL-expressing neurons localized in the area postrema and nucleus tractus solitarius of the brainstem. It then triggers the activation of neurons localized within the parabrachial nucleus and central amygdala, which constitutes part of the 'emergency circuit' that shapes responses to stressful conditions. The GDF15-GFRAL signal induces expression of genes involved in metabolism, such as lipid metabolism in adipose tissues. Required for avoidance behavior in response to food allergens: induced downstream of mast cell activation to promote aversion and minimize harmful effects of exposure to noxious substances. In addition to suppress appetite, also promotes weight loss by enhancing energy expenditure in muscle: acts by increasing calcium futile cycling in muscle. Contributes to the effect of metformin, an anti-diabetic drug, on appetite reduction and weight loss: produced in the kidney in response to metformin treatment, thereby activating the GDF15-GFRAL response, leading to reduced appetite and weight. Produced in response to anticancer drugs, such as camptothecin or cisplatin, promoting nausea and contributing to malnutrition. Overproduced in many cancers, promoting anorexia in cancer (cachexia). Responsible for the risk of nausea during pregnancy: high levels of GDF15 during pregnancy, mostly originating from embryos, are associated with increased nausea. Maternal sensitivity to nausea is probably determined by pre-pregnancy exposure to GDF15, females with naturally high level of GDF15 being less susceptible to nausea than female mice with low levels of GDF15 before pregnancy. Promotes metabolic adaptation in response to systemic inflammation caused by bacterial and viral infections in order to promote tissue tolerance and prevent tissue damage. Required for tissue tolerance in response to myocardial infarction by acting as an inhibitor of leukocyte integring activation, thereby protecting against cardiac rupture. Inhibits growth hormone signaling on hepatocytes. The polypeptide is Growth/differentiation factor 15 (Mus musculus (Mouse)).